The following is a 450-amino-acid chain: MKKVFVKTYGCQMNEYDSDKMVDVLNASQGLEATDNVEDADVILFNTCSVREKAQEKVFSELGRMKALKAVKPDLVIGVGGCVASQEGASIVSRAPYVDVVFGPQTLHRLPDLIARRQRTGQSQVDISFPEIEKFDHLPPARVEGPSAFVSIMEGCSKYCSYCVVPYTRGEEVSRPFEDVLAEVAGLAEQGVREVTLLGQNVNAYRGKMGDTSEIADFALLIEYVAEIPGIERIRYTTSHPKEFTSRLVELYGRCDKLVNHLHLPVQHASDRILMAMKRGYSVLEYKSIIRRLRALRPDMSMSSDFIVGFPGETDADFDKLMAMIEEIGYDTSFSFIFSPRPGTPAANLHDDTPREVKLQRLQRLQATIEENVQRISQGMVGTVQRILVEGPARKDPTELHGRTENNRVVNFALPGVPQAGRDRLVGQLVDVSITQAFPHSLRGEIVVRQ.

In terms of domain architecture, MTTase N-terminal spans 2-119 (KKVFVKTYGC…LPDLIARRQR (118 aa)). Residues Cys-11, Cys-48, Cys-82, Cys-156, Cys-160, and Cys-163 each coordinate [4Fe-4S] cluster. The region spanning 142–375 (RVEGPSAFVS…QATIEENVQR (234 aa)) is the Radical SAM core domain. Residues 378–448 (QGMVGTVQRI…PHSLRGEIVV (71 aa)) form the TRAM domain.

Belongs to the methylthiotransferase family. MiaB subfamily. In terms of assembly, monomer. [4Fe-4S] cluster is required as a cofactor.

It localises to the cytoplasm. It catalyses the reaction N(6)-dimethylallyladenosine(37) in tRNA + (sulfur carrier)-SH + AH2 + 2 S-adenosyl-L-methionine = 2-methylsulfanyl-N(6)-dimethylallyladenosine(37) in tRNA + (sulfur carrier)-H + 5'-deoxyadenosine + L-methionine + A + S-adenosyl-L-homocysteine + 2 H(+). Functionally, catalyzes the methylthiolation of N6-(dimethylallyl)adenosine (i(6)A), leading to the formation of 2-methylthio-N6-(dimethylallyl)adenosine (ms(2)i(6)A) at position 37 in tRNAs that read codons beginning with uridine. The protein is tRNA-2-methylthio-N(6)-dimethylallyladenosine synthase of Cupriavidus taiwanensis (strain DSM 17343 / BCRC 17206 / CCUG 44338 / CIP 107171 / LMG 19424 / R1) (Ralstonia taiwanensis (strain LMG 19424)).